Consider the following 1003-residue polypeptide: Glutamate receptor ionotropic, NMDA 3B (1003 aa).

The signal sequence occupies residues 1–24 (MECVQTLWLSLALALARGSWVVRG). Residues 25–574 (HPQPCGVPTR…PIGAFMWPLH (550 aa)) lie on the Extracellular side of the membrane. N-linked (GlcNAc...) asparagine glycans are attached at residues Asn-69, Asn-212, Asn-344, Asn-451, and Asn-465. 2 cysteine pairs are disulfide-bonded: Cys-439–Cys-475 and Cys-445–Cys-476. Positions 531, 533, and 538 each coordinate glycine. Positions 533 and 538 each coordinate D-serine. The chain crosses the membrane as a helical span at residues 575-594 (WSMWVGVFAALHLTALFLTL). The Cytoplasmic portion of the chain corresponds to 595-615 (YEWRSPYGLTPRGRNRGTVFS). Positions 616–627 (YSSALNLCYAIL) form an intramembrane region, discontinuously helical. At 628-641 (FGRTVSSKTPKCPT) the chain is on the cytoplasmic side. The chain crosses the membrane as a helical span at residues 642-661 (GRFLMNLWAIFCLLVLSSYT). Residues 662–832 (ANLAAVMVGD…TLQMGVYHLS (171 aa)) are Extracellular-facing. Residue Ser-701 participates in glycine binding. The D-serine site is built by Ser-701, Ala-702, and Asp-745. Asp-745 lines the glycine pocket. N-linked (GlcNAc...) asparagine glycosylation occurs at Asn-786. A helical transmembrane segment spans residues 833–848 (GLFVLLCLGLGSALLT). At 849–1003 (SLGEHVFYRL…RLLHAAPAES (155 aa)) the chain is on the cytoplasmic side. A disordered region spans residues 883 to 912 (LNTGPPEGQQERAEQECSGPKEEQPAADGA). Positions 891–906 (QQERAEQECSGPKEEQ) are enriched in basic and acidic residues. Residues 947–986 (SNGPGVQAELRELELRIEAARERLRSALLRRGELRAQLGD) adopt a coiled-coil conformation. Residues 952–985 (VQAELRELELRIEAARERLRSALLRRGELRAQLG) form an involved in the trafficking and surface expression of NMDARs region.

The protein belongs to the glutamate-gated ion channel (TC 1.A.10.1) family. NR3B/GRIN3B subfamily. As to quaternary structure, forms heterotetrameric channels that contain at least two GluN1 subunits and at least a combination of one GluN2 and one GluN3 subunits (in vitro). Forms heterotetrameric channels composed of two GluN1/zeta subunits (GRIN1), and two identical GluN3 subunits (GRIN3A or GRIN3B) (in vitro). Does not form functional homomeric channels. As to expression, expressed in the facial nucleus and the ambiguus nucleus of the brainstem, pons, medulla, spinal cord and cerebellum.

Its subcellular location is the cell membrane. It is found in the postsynaptic cell membrane. It carries out the reaction Ca(2+)(in) = Ca(2+)(out). The enzyme catalyses Na(+)(in) = Na(+)(out). Its function is as follows. Component of a non-conventional N-methyl-D-aspartate (NMDA) receptors (NMDARs) that function as heterotetrameric, ligand-gated cation channels with low calcium permeability and low voltage-dependent block by Mg(2+). Forms glutamatergic receptor complexes with GluN1 and GluN2 subunits which are activated by glycine binding to the GluN1 and GluN3 subunits and L-glutamate binding to GluN2 subunits. Forms excitatory glycinergic receptor complexes with GluN1 alone which are activated by glycine binding to the GluN1 and GluN3 subunits. GluN3B subunit also binds D-serine and, in the absence of glycine, activates glycinergic receptor complexes, but with lower efficacy than glycine. Each GluN3 subunit confers differential attributes to channel properties, including activation, deactivation and desensitization kinetics, pH sensitivity, Ca2(+) permeability, and binding to allosteric modulators. The chain is Glutamate receptor ionotropic, NMDA 3B from Mus musculus (Mouse).